The following is a 555-amino-acid chain: Aerobic glycerol-3-phosphate dehydrogenase (555 aa).

24–52 (DLFIIGGGITGAGTALDAASRGMKVALSE) lines the FAD pocket.

This sequence belongs to the FAD-dependent glycerol-3-phosphate dehydrogenase family. It depends on FAD as a cofactor.

Its subcellular location is the cytoplasm. The enzyme catalyses a quinone + sn-glycerol 3-phosphate = dihydroxyacetone phosphate + a quinol. Its pathway is polyol metabolism; glycerol degradation via glycerol kinase pathway; glycerone phosphate from sn-glycerol 3-phosphate (aerobic route): step 1/1. In Bacillus subtilis (strain 168), this protein is Aerobic glycerol-3-phosphate dehydrogenase (glpD).